We begin with the raw amino-acid sequence, 241 residues long: Large ribosomal subunit protein uL2 (241 aa).

A compositionally biased stretch (basic residues) spans 1-12 (MGKRLISQRRGR). Disordered stretches follow at residues 1 to 21 (MGKR…RSAS) and 200 to 241 (AVDH…GKRR).

Belongs to the universal ribosomal protein uL2 family. Part of the 50S ribosomal subunit. Forms a bridge to the 30S subunit in the 70S ribosome.

In terms of biological role, one of the primary rRNA binding proteins. Required for association of the 30S and 50S subunits to form the 70S ribosome, for tRNA binding and peptide bond formation. It has been suggested to have peptidyltransferase activity; this is somewhat controversial. Makes several contacts with the 16S rRNA in the 70S ribosome. The chain is Large ribosomal subunit protein uL2 from Methanothermobacter thermautotrophicus (strain ATCC 29096 / DSM 1053 / JCM 10044 / NBRC 100330 / Delta H) (Methanobacterium thermoautotrophicum).